The chain runs to 507 residues: ATP synthase subunit alpha (507 aa).

171 to 178 (GDRQTGKT) contacts ATP.

The protein belongs to the ATPase alpha/beta chains family. F-type ATPases have 2 components, CF(1) - the catalytic core - and CF(0) - the membrane proton channel. CF(1) has five subunits: alpha(3), beta(3), gamma(1), delta(1), epsilon(1). CF(0) has three main subunits: a(1), b(2) and c(9-12). The alpha and beta chains form an alternating ring which encloses part of the gamma chain. CF(1) is attached to CF(0) by a central stalk formed by the gamma and epsilon chains, while a peripheral stalk is formed by the delta and b chains.

It localises to the cell inner membrane. The enzyme catalyses ATP + H2O + 4 H(+)(in) = ADP + phosphate + 5 H(+)(out). Its function is as follows. Produces ATP from ADP in the presence of a proton gradient across the membrane. The alpha chain is a regulatory subunit. This chain is ATP synthase subunit alpha, found in Bdellovibrio bacteriovorus (strain ATCC 15356 / DSM 50701 / NCIMB 9529 / HD100).